Consider the following 92-residue polypeptide: MWPVLWTVVRTYAPYVTFPVAFVVGAVGYHLEWFIRGKTPQPVEEEKSILERREDRKLDEMLGKDHTQVVSLKDKLEFAPKAVLNRNRPEKN.

A helical membrane pass occupies residues 15–34 (YVTFPVAFVVGAVGYHLEWF).

It belongs to the SMIM12 family.

The protein localises to the membrane. The chain is Small integral membrane protein 12 (Smim12) from Mus musculus (Mouse).